The sequence spans 338 residues: Lipoate-protein ligase A (338 aa).

Residues 29–216 (SPDQRVLFLW…AFFNYYDEKV (188 aa)) form the BPL/LPL catalytic domain. Residues R71, 76-79 (GAVF), and K134 contribute to the ATP site. K134 is a (R)-lipoate binding site.

The protein belongs to the LplA family. As to quaternary structure, monomer.

Its subcellular location is the cytoplasm. It catalyses the reaction L-lysyl-[lipoyl-carrier protein] + (R)-lipoate + ATP = N(6)-[(R)-lipoyl]-L-lysyl-[lipoyl-carrier protein] + AMP + diphosphate + H(+). Its pathway is protein modification; protein lipoylation via exogenous pathway; protein N(6)-(lipoyl)lysine from lipoate: step 1/2. The protein operates within protein modification; protein lipoylation via exogenous pathway; protein N(6)-(lipoyl)lysine from lipoate: step 2/2. Functionally, catalyzes both the ATP-dependent activation of exogenously supplied lipoate to lipoyl-AMP and the transfer of the activated lipoyl onto the lipoyl domains of lipoate-dependent enzymes. The polypeptide is Lipoate-protein ligase A (Yersinia enterocolitica serotype O:8 / biotype 1B (strain NCTC 13174 / 8081)).